The chain runs to 210 residues: Large ribosomal subunit protein uL3 (210 aa).

Belongs to the universal ribosomal protein uL3 family. Part of the 50S ribosomal subunit. Forms a cluster with proteins L14 and L19.

In terms of biological role, one of the primary rRNA binding proteins, it binds directly near the 3'-end of the 23S rRNA, where it nucleates assembly of the 50S subunit. This Natranaerobius thermophilus (strain ATCC BAA-1301 / DSM 18059 / JW/NM-WN-LF) protein is Large ribosomal subunit protein uL3.